A 435-amino-acid polypeptide reads, in one-letter code: Adenylosuccinate synthetase (435 aa).

GTP is bound by residues 20-26 and 48-50; these read GDEGKGK and GHT. D21 serves as the catalytic Proton acceptor. 2 residues coordinate Mg(2+): D21 and G48. Residues 21 to 24, 46 to 49, T134, R148, Q229, T244, and R308 contribute to the IMP site; these read DEGK and NAGH. H49 serves as the catalytic Proton donor. 304–310 serves as a coordination point for substrate; that stretch reads TTTGRPR. Residues R310, 336–338, and 422–424 each bind GTP; these read KVD and SMG.

It belongs to the adenylosuccinate synthetase family. In terms of assembly, homodimer. Mg(2+) is required as a cofactor.

It is found in the cytoplasm. The enzyme catalyses IMP + L-aspartate + GTP = N(6)-(1,2-dicarboxyethyl)-AMP + GDP + phosphate + 2 H(+). It functions in the pathway purine metabolism; AMP biosynthesis via de novo pathway; AMP from IMP: step 1/2. Plays an important role in the de novo pathway of purine nucleotide biosynthesis. Catalyzes the first committed step in the biosynthesis of AMP from IMP. This chain is Adenylosuccinate synthetase, found in Thermoplasma acidophilum (strain ATCC 25905 / DSM 1728 / JCM 9062 / NBRC 15155 / AMRC-C165).